The primary structure comprises 771 residues: MDVSELEENLFAASDAKLHGDMCKELSAVYCKVLSIFPSLEEARPRSKSGIQTLCSLHIALEKAKNILQHCSECSKLYLAITGDAVLLKFEKAKSALIDSLRRVEDIVPSSIGSQILDIVGELEHTKFLLDPSEKEVGDRIIALLQQGKKFDNGSDSTELEIFHQAATRLSITSSRSALAERRALKKVIDRARVEEDKRKESIVAYLLHLMRKYSKLFRSEMMDENDSPCSTPCSPTGQGPNEDRVNAFGRQLSKFGSINYKPMNSRKSGQMPIPPEELRCPISLQLMYDPVIIASGQTYERVCIEKWFSDGHNSCPKTQQQLPHLSLTPNYCVKGLIASWCEQNGITVPTGPPESLDLNYWRLAMSDSESPNSKSVDSVGLCTPKDIRVVPLEESSTIESERQQKEKNNAPDEVDSEINVLEGYQDILAIVDKEEDLAKKCKVVENVRILLKDNEEARILMGANGFVEAFLQFLESAVHDNNAAAQETGAMALFNLAVNNNRNKELMLTSGVIPLLEKMISCSQSQGPATALYLNLSCLEKAKPVIGSSQAVSFFVNLLLQDTKTQCKLDALHALYNLSTYSPNIPTLLSSNIIKSLQVLASTGNHLWIEKSLAVLLNLASSREGKEEMITTQGMISTLATVLDTGDTVEQEQAVSCLVILCTGSESCIQMVLQEGVIPSLVSISVNGSPRGRDKSQKLLMLFREQRHRDQPSPNKEEAPRKTVSAPMAIPAPVSAPESEVKPLTKSISRRKTMTRPFSFLWKKSHSIHH.

Positions 274–348 (IPPEELRCPI…ASWCEQNGIT (75 aa)) constitute a U-box domain. A disordered region spans residues 394-415 (EESSTIESERQQKEKNNAPDEV). Basic and acidic residues predominate over residues 400 to 411 (ESERQQKEKNNA). ARM repeat units lie at residues 456 to 499 (EEAR…NLAV), 502 to 542 (NRNK…CLEK), 544 to 581 (KPVIGSSQAVSFFVNLLLQDTKTQCKLDALHALYNLST), 583 to 622 (SPNIPTLLSSNIIKSLQVLASTGNHLWIEKSLAVLLNLAS), and 625 to 664 (EGKEEMITTQGMISTLATVLDTGDTVEQEQAVSCLVILCT). A compositionally biased stretch (basic and acidic residues) spans 706–722 (EQRHRDQPSPNKEEAPR). A disordered region spans residues 706–751 (EQRHRDQPSPNKEEAPRKTVSAPMAIPAPVSAPESEVKPLTKSISR).

The enzyme catalyses S-ubiquitinyl-[E2 ubiquitin-conjugating enzyme]-L-cysteine + [acceptor protein]-L-lysine = [E2 ubiquitin-conjugating enzyme]-L-cysteine + N(6)-ubiquitinyl-[acceptor protein]-L-lysine.. Its pathway is protein modification; protein ubiquitination. In terms of biological role, functions as an E3 ubiquitin ligase. In Arabidopsis thaliana (Mouse-ear cress), this protein is U-box domain-containing protein 6 (PUB6).